We begin with the raw amino-acid sequence, 367 residues long: UDP-N-acetylenolpyruvoylglucosamine reductase (367 aa).

Residues 29-205 (VGPVAQRVIT…LEVEFKLDAS (177 aa)) enclose the FAD-binding PCMH-type domain. The active site involves R177. The active-site Proton donor is S260. E359 is an active-site residue.

This sequence belongs to the MurB family. Requires FAD as cofactor.

It is found in the cytoplasm. It carries out the reaction UDP-N-acetyl-alpha-D-muramate + NADP(+) = UDP-N-acetyl-3-O-(1-carboxyvinyl)-alpha-D-glucosamine + NADPH + H(+). Its pathway is cell wall biogenesis; peptidoglycan biosynthesis. In terms of biological role, cell wall formation. The polypeptide is UDP-N-acetylenolpyruvoylglucosamine reductase (Mycobacterium leprae (strain Br4923)).